The sequence spans 204 residues: Large ribosomal subunit protein uL4 (204 aa).

The disordered stretch occupies residues His48–Ser75.

This sequence belongs to the universal ribosomal protein uL4 family. Part of the 50S ribosomal subunit.

One of the primary rRNA binding proteins, this protein initially binds near the 5'-end of the 23S rRNA. It is important during the early stages of 50S assembly. It makes multiple contacts with different domains of the 23S rRNA in the assembled 50S subunit and ribosome. In terms of biological role, forms part of the polypeptide exit tunnel. In Campylobacter fetus subsp. fetus (strain 82-40), this protein is Large ribosomal subunit protein uL4.